Reading from the N-terminus, the 397-residue chain is Argininosuccinate synthase (397 aa).

9–17 serves as a coordination point for ATP; that stretch reads AYSGGLDTT. Tyr-87 provides a ligand contact to L-citrulline. Gly-117 is a binding site for ATP. Positions 119, 123, and 124 each coordinate L-aspartate. L-citrulline is bound at residue Asn-123. Residues Arg-127, Ser-174, Ser-183, Glu-259, and Tyr-271 each contribute to the L-citrulline site.

The protein belongs to the argininosuccinate synthase family. Type 1 subfamily. Homotetramer.

The protein resides in the cytoplasm. The catalysed reaction is L-citrulline + L-aspartate + ATP = 2-(N(omega)-L-arginino)succinate + AMP + diphosphate + H(+). It functions in the pathway amino-acid biosynthesis; L-arginine biosynthesis; L-arginine from L-ornithine and carbamoyl phosphate: step 2/3. This is Argininosuccinate synthase from Pyrobaculum aerophilum (strain ATCC 51768 / DSM 7523 / JCM 9630 / CIP 104966 / NBRC 100827 / IM2).